Here is a 125-residue protein sequence, read N- to C-terminus: Insulin growth factor-like family member 3 (125 aa).

The N-terminal stretch at 1-24 (MRPRCCILALVCWITVFLLQCSKG) is a signal peptide.

It belongs to the IGFL family. Detected in the cerebellum.

The protein resides in the secreted. Functionally, potential ligand of the IGFLR1 cell membrane receptor. The chain is Insulin growth factor-like family member 3 (IGFL3) from Homo sapiens (Human).